The sequence spans 147 residues: MRLHDLKPAEGARRERKRVGRGIGSGHGKTSGRGQKGQKARSGGGVRPGFEGGQMPLTRRLPKRGFTNIFKKEYAIVNVGTLEERFEDGAVITPEALIESGIIKDVKDGVKILGDGDLNKKFTVRAHKFSQSAIEKIQAVGGKAEVI.

Residues 1-13 (MRLHDLKPAEGAR) are compositionally biased toward basic and acidic residues. Positions 1–58 (MRLHDLKPAEGARRERKRVGRGIGSGHGKTSGRGQKGQKARSGGGVRPGFEGGQMPLT) are disordered. Composition is skewed to gly residues over residues 21–35 (RGIG…GRGQ) and 42–52 (SGGGVRPGFEG).

This sequence belongs to the universal ribosomal protein uL15 family. As to quaternary structure, part of the 50S ribosomal subunit.

In terms of biological role, binds to the 23S rRNA. This chain is Large ribosomal subunit protein uL15, found in Thermoanaerobacter sp. (strain X514).